Reading from the N-terminus, the 352-residue chain is Holliday junction branch migration complex subunit RuvB (352 aa).

Residues 1–182 (MRIELLNTPP…FGINSRFDYY (182 aa)) form a large ATPase domain (RuvB-L) region. Residues isoleucine 21, arginine 22, glycine 63, lysine 66, threonine 67, threonine 68, 129–131 (EDF), arginine 172, tyrosine 182, and arginine 219 contribute to the ATP site. Threonine 67 is a Mg(2+) binding site. A small ATPAse domain (RuvB-S) region spans residues 183-253 (EPELLTRIII…IAMKTLECLE (71 aa)). Residues 256 to 352 (EEGLDEMDKK…LPLFDESEAD (97 aa)) form a head domain (RuvB-H) region. DNA contacts are provided by arginine 292, arginine 311, and arginine 316.

The protein belongs to the RuvB family. As to quaternary structure, homohexamer. Forms an RuvA(8)-RuvB(12)-Holliday junction (HJ) complex. HJ DNA is sandwiched between 2 RuvA tetramers; dsDNA enters through RuvA and exits via RuvB. An RuvB hexamer assembles on each DNA strand where it exits the tetramer. Each RuvB hexamer is contacted by two RuvA subunits (via domain III) on 2 adjacent RuvB subunits; this complex drives branch migration. In the full resolvosome a probable DNA-RuvA(4)-RuvB(12)-RuvC(2) complex forms which resolves the HJ.

The protein localises to the cytoplasm. The enzyme catalyses ATP + H2O = ADP + phosphate + H(+). In terms of biological role, the RuvA-RuvB-RuvC complex processes Holliday junction (HJ) DNA during genetic recombination and DNA repair, while the RuvA-RuvB complex plays an important role in the rescue of blocked DNA replication forks via replication fork reversal (RFR). RuvA specifically binds to HJ cruciform DNA, conferring on it an open structure. The RuvB hexamer acts as an ATP-dependent pump, pulling dsDNA into and through the RuvAB complex. RuvB forms 2 homohexamers on either side of HJ DNA bound by 1 or 2 RuvA tetramers; 4 subunits per hexamer contact DNA at a time. Coordinated motions by a converter formed by DNA-disengaged RuvB subunits stimulates ATP hydrolysis and nucleotide exchange. Immobilization of the converter enables RuvB to convert the ATP-contained energy into a lever motion, pulling 2 nucleotides of DNA out of the RuvA tetramer per ATP hydrolyzed, thus driving DNA branch migration. The RuvB motors rotate together with the DNA substrate, which together with the progressing nucleotide cycle form the mechanistic basis for DNA recombination by continuous HJ branch migration. Branch migration allows RuvC to scan DNA until it finds its consensus sequence, where it cleaves and resolves cruciform DNA. The chain is Holliday junction branch migration complex subunit RuvB from Chlorobium chlorochromatii (strain CaD3).